The chain runs to 286 residues: Pollen allergen Phl p 5a (286 aa).

The segment covering 1-34 (ADLGYGPATPAAPAAGYTPATPAAPAGADAAGKA) has biased composition (low complexity). Positions 1–35 (ADLGYGPATPAAPAAGYTPATPAAPAGADAAGKAT) are disordered.

This sequence belongs to the Poa p IX/Phl p VI allergen family.

It is found in the secreted. This chain is Pollen allergen Phl p 5a, found in Phleum pratense (Common timothy).